The primary structure comprises 241 residues: Uracil-DNA glycosylase (241 aa).

D68 (proton acceptor) is an active-site residue.

Belongs to the uracil-DNA glycosylase (UDG) superfamily. UNG family.

It localises to the cytoplasm. It carries out the reaction Hydrolyzes single-stranded DNA or mismatched double-stranded DNA and polynucleotides, releasing free uracil.. In terms of biological role, excises uracil residues from the DNA which can arise as a result of misincorporation of dUMP residues by DNA polymerase or due to deamination of cytosine. The polypeptide is Uracil-DNA glycosylase (Sinorhizobium medicae (strain WSM419) (Ensifer medicae)).